Here is a 352-residue protein sequence, read N- to C-terminus: Light dependent period A (352 aa).

4Fe-4S ferredoxin-type domains are found at residues 88-119 (RRAW…STGV) and 121-144 (RDRC…AQAW). 8 residues coordinate [4Fe-4S] cluster: Cys97, Cys101, Cys105, Cys109, Cys124, Cys127, Cys130, and Cys134.

In terms of assembly, interacts with KaiA, CikA and SasA; the complexes do not follow circadian rhythms. The cofactor is [4Fe-4S] cluster.

In terms of biological role, functions in an input pathway to the Kai circadian clock. Probably senses the metabolic state of the cell via plastoquinone levels and informs the clock to modulate the photoperiod length. Deletion decreases the ability of the bacteria to modulate the circadian period in response to altered light regimes. Mild overexpression increases the photoperiod. Rapidly degraded in the presence of the quinone analog DBMIB (2,5-dibromo-3-methyl-6-isopropyl-p-benzoquinone), an artifical electron acceptor for photosystem II that reduces the plastoquinone pool. Partially resonsible for sensitivity of CikA to DBMIB, influences the levels of KaiA. This is Light dependent period A from Synechococcus elongatus (strain ATCC 33912 / PCC 7942 / FACHB-805) (Anacystis nidulans R2).